We begin with the raw amino-acid sequence, 148 residues long: Large ribosomal subunit protein bL9 (148 aa).

The protein belongs to the bacterial ribosomal protein bL9 family.

Binds to the 23S rRNA. This Finegoldia magna (strain ATCC 29328 / DSM 20472 / WAL 2508) (Peptostreptococcus magnus) protein is Large ribosomal subunit protein bL9.